The chain runs to 37 residues: Cortex morphogenetic protein A (37 aa).

Can form a complex with SpoIVA and ClpX.

Its subcellular location is the forespore. Its function is as follows. Ensures proper spore envelope assembly. Represses premature cortex assembly until coat assembly successfully initiates. Also participates in a quality-control pathway that selectively removes defective sporulating cells through regulated cell death. Acts as an adaptator that delivers SpoIVA to the ClpXP proteolytic machinery for degradation, specifically in cells that improperly assemble the spore envelope. The chain is Cortex morphogenetic protein A from Bacillus subtilis (strain 168).